Consider the following 434-residue polypeptide: Elongation factor 1-alpha (434 aa).

Residues 5 to 232 form the tr-type G domain; the sequence is KPHINLVVIG…DNVHPPKRPV (228 aa). The interval 14 to 21 is G1; sequence GHVVAGKS. 14–21 is a GTP binding site; that stretch reads GHVVAGKS. The tract at residues 70–74 is G2; that stretch reads GITID. The tract at residues 91-94 is G3; the sequence is DAPG. Residues 91 to 95 and 153 to 156 contribute to the GTP site; these read DAPGH and NKMD. The G4 stretch occupies residues 153–156; the sequence is NKMD. The tract at residues 196 to 198 is G5; the sequence is SGF.

This sequence belongs to the TRAFAC class translation factor GTPase superfamily. Classic translation factor GTPase family. EF-Tu/EF-1A subfamily.

The protein resides in the cytoplasm. In terms of biological role, this protein promotes the GTP-dependent binding of aminoacyl-tRNA to the A-site of ribosomes during protein biosynthesis. The polypeptide is Elongation factor 1-alpha (Blastocystis hominis).